A 62-amino-acid chain; its full sequence is Small ribosomal subunit protein eS30z/eS30y/eS30x (62 aa).

A disordered region spans residues 1–38; that stretch reads MGKVHGSLARAGKVRGQTPKVAKQDKKKKPRGRAHKRL. Residues 25 to 38 show a composition bias toward basic residues; it reads DKKKKPRGRAHKRL.

This sequence belongs to the eukaryotic ribosomal protein eS30 family.

This Arabidopsis thaliana (Mouse-ear cress) protein is Small ribosomal subunit protein eS30z/eS30y/eS30x (RPS30A).